Here is a 357-residue protein sequence, read N- to C-terminus: 4-hydroxy-3-methylbut-2-en-1-yl diphosphate synthase (flavodoxin) (357 aa).

Positions 265, 268, 300, and 307 each coordinate [4Fe-4S] cluster.

It belongs to the IspG family. As to quaternary structure, homodimer. [4Fe-4S] cluster is required as a cofactor.

It carries out the reaction (2E)-4-hydroxy-3-methylbut-2-enyl diphosphate + oxidized [flavodoxin] + H2O + 2 H(+) = 2-C-methyl-D-erythritol 2,4-cyclic diphosphate + reduced [flavodoxin]. It functions in the pathway isoprenoid biosynthesis; isopentenyl diphosphate biosynthesis via DXP pathway; isopentenyl diphosphate from 1-deoxy-D-xylulose 5-phosphate: step 5/6. Converts 2C-methyl-D-erythritol 2,4-cyclodiphosphate (ME-2,4cPP) into 1-hydroxy-2-methyl-2-(E)-butenyl 4-diphosphate. This is 4-hydroxy-3-methylbut-2-en-1-yl diphosphate synthase (flavodoxin) from Aquifex aeolicus (strain VF5).